The chain runs to 355 residues: Zinc transporter ZIP13 homolog (355 aa).

Residue Asn-4 is glycosylated (N-linked (GlcNAc...) asparagine). 3 consecutive transmembrane segments (helical) span residues 37-57 (VFSL…LIII), 79-99 (VLLS…LLPE), and 118-138 (LWVL…SGYA). A glycan (N-linked (GlcNAc...) asparagine) is linked at Asn-218. Transmembrane regions (helical) follow at residues 273–293 (LLTA…SGVT) and 301–321 (SWIM…TVLP).

Belongs to the ZIP transporter (TC 2.A.5) family. KE4/Catsup subfamily.

The protein localises to the basolateral cell membrane. It is found in the golgi apparatus membrane. Involved in zinc transport and homeostasis. In Drosophila melanogaster (Fruit fly), this protein is Zinc transporter ZIP13 homolog (Zip99C).